Reading from the N-terminus, the 117-residue chain is Large-conductance mechanosensitive channel (117 aa).

The next 3 membrane-spanning stretches (helical) occupy residues 7 to 27 (EFALKGNVLDLAIAVVMGAAF), 30 to 50 (IVTSLVTYIIMPLIGKIFGSV), and 64 to 84 (GLFIQSIIDFIIVAIALFIFV).

It belongs to the MscL family. Homopentamer.

The protein resides in the cell membrane. Functionally, channel that opens in response to stretch forces in the membrane lipid bilayer. May participate in the regulation of osmotic pressure changes within the cell. The chain is Large-conductance mechanosensitive channel from Staphylococcus haemolyticus (strain JCSC1435).